We begin with the raw amino-acid sequence, 184 residues long: Probable RNA 2'-phosphotransferase (184 aa).

Belongs to the KptA/TPT1 family.

Its function is as follows. Removes the 2'-phosphate from RNA via an intermediate in which the phosphate is ADP-ribosylated by NAD followed by a presumed transesterification to release the RNA and generate ADP-ribose 1''-2''-cyclic phosphate (APPR&gt;P). May function as an ADP-ribosylase. The chain is Probable RNA 2'-phosphotransferase from Burkholderia pseudomallei (strain K96243).